The following is a 444-amino-acid chain: Methylenetetrahydrofolate--tRNA-(uracil-5-)-methyltransferase TrmFO (444 aa).

10-15 (GAGLAG) lines the FAD pocket.

It belongs to the MnmG family. TrmFO subfamily. The cofactor is FAD.

The protein localises to the cytoplasm. The enzyme catalyses uridine(54) in tRNA + (6R)-5,10-methylene-5,6,7,8-tetrahydrofolate + NADH + H(+) = 5-methyluridine(54) in tRNA + (6S)-5,6,7,8-tetrahydrofolate + NAD(+). It catalyses the reaction uridine(54) in tRNA + (6R)-5,10-methylene-5,6,7,8-tetrahydrofolate + NADPH + H(+) = 5-methyluridine(54) in tRNA + (6S)-5,6,7,8-tetrahydrofolate + NADP(+). In terms of biological role, catalyzes the folate-dependent formation of 5-methyl-uridine at position 54 (M-5-U54) in all tRNAs. The sequence is that of Methylenetetrahydrofolate--tRNA-(uracil-5-)-methyltransferase TrmFO from Streptococcus suis (strain 98HAH33).